A 592-amino-acid polypeptide reads, in one-letter code: MEMYETLGKVGEGSYGTVMKCKHKNTGQIVAIKIFYERPEQSVNKIAMREIKFLKQFHHENLVNLIEVFRQKKKIHLVFEFIDHTVLDELQHYCHGLESKRLRKYLFQILRAIDYLHSNNIIHRDIKPENILVSQSGITKLCDFGFARTLAAPGDIYTDYVATRWYRAPELVLKDTSYGKPVDIWALGCMIIEMATGNPYLPSSSDLDLLHKIVLKVGNLSPHLQNIFSKSPIFAGVVLPQVQHPKNARKKYPKLNGLLADIVHACLQIDPADRISSSDLLHHEYFTRDGFIEKFMPELKAKLLQEAKVNSLIKPKESSKENELRKDERKTVYTNTLLSSSVLGKEIEKEKKPKEIKVRVIKVKGGRGDISEPKKKEYEGGLGQQDANENVHPMSPDTKLVTIEPPNPINPSTNCNGLKENPHCGGSVTMPPINLTNSNLMAANLSSNLFHPSVRLTERAKKRRTSSQSIGQVMPNSRQEDPGPIQSQMEKGIFNERTGHSDQMANENKRKLNFSRSDRKEFHFPELPVTIQSKDTKGMEVKQIKMLKRESKKTESSKIPTLLNVDQNQEKQEGGDGHCEGKNLKRNRFFFW.

Residues 4-286 (YETLGKVGEG…SSDLLHHEYF (283 aa)) form the Protein kinase domain. Residues 10–18 (VGEGSYGTV) and Lys33 each bind ATP. A [NKR]KIAxRE motif is present at residues 44-50 (NKIAMRE). Catalysis depends on Asp125, which acts as the Proton acceptor. Residue Thr158 is modified to Phosphothreonine. The residue at position 160 (Tyr160) is a Phosphotyrosine. Positions 368–379 (GDISEPKKKEYE) are enriched in basic and acidic residues. 2 disordered regions span residues 368-390 (GDIS…ANEN) and 459-485 (RAKK…PGPI). The segment covering 466–477 (SSQSIGQVMPNS) has biased composition (polar residues).

The protein belongs to the protein kinase superfamily. CMGC Ser/Thr protein kinase family. CDC2/CDKX subfamily.

The protein localises to the cytoplasm. The enzyme catalyses L-seryl-[protein] + ATP = O-phospho-L-seryl-[protein] + ADP + H(+). The catalysed reaction is L-threonyl-[protein] + ATP = O-phospho-L-threonyl-[protein] + ADP + H(+). The sequence is that of Cyclin-dependent kinase-like 3 from Homo sapiens (Human).